The sequence spans 1146 residues: Killer toxin subunits alpha/beta (1146 aa).

The N-terminal stretch at M1–L17 is a signal peptide. Residues E18–R29 constitute a propeptide that is removed on maturation. LysM domains lie at A205–C234 and K254–V303. The Chitin-binding type-1 domain occupies I316–Y372. Disulfide bonds link C319–C338, C332–C344, C337–C351, and C366–C370. Residues F383–E735 form the GH18 domain. Residues I424 and G447–D450 each bind chitin. The active-site Proton donor is E495. Residues Y496, M562–D565, and W707 each bind chitin. N771, N858, N868, N876, and N1117 each carry an N-linked (GlcNAc...) asparagine glycan.

It belongs to the glycosyl hydrolase 18 family. In terms of assembly, the killer toxin is composed of three subunits: alpha, beta and gamma. Post-translationally, RF2 is potentially split by membrane-bound basic amino acid-specific peptidase to yield the alpha and beta subunits.

The enzyme catalyses Random endo-hydrolysis of N-acetyl-beta-D-glucosaminide (1-&gt;4)-beta-linkages in chitin and chitodextrins.. The alpha subunit is a potent exochitinase. Along with the beta subunit it plays a role in the initial interaction of the toxin with sensitive cells and allow the gamma subunit (the active toxin) to gain entry into the cell. This Kluyveromyces lactis (strain ATCC 8585 / CBS 2359 / DSM 70799 / NBRC 1267 / NRRL Y-1140 / WM37) (Yeast) protein is Killer toxin subunits alpha/beta.